The following is a 616-amino-acid chain: Dihydroxy-acid dehydratase (616 aa).

Position 81 (D81) interacts with Mg(2+). Residue C122 coordinates [2Fe-2S] cluster. Mg(2+) contacts are provided by D123 and K124. Residue K124 is modified to N6-carboxylysine. C195 serves as a coordination point for [2Fe-2S] cluster. Residue E491 coordinates Mg(2+). S517 functions as the Proton acceptor in the catalytic mechanism.

Belongs to the IlvD/Edd family. Homodimer. Requires [2Fe-2S] cluster as cofactor. Mg(2+) is required as a cofactor.

It carries out the reaction (2R)-2,3-dihydroxy-3-methylbutanoate = 3-methyl-2-oxobutanoate + H2O. The catalysed reaction is (2R,3R)-2,3-dihydroxy-3-methylpentanoate = (S)-3-methyl-2-oxopentanoate + H2O. It participates in amino-acid biosynthesis; L-isoleucine biosynthesis; L-isoleucine from 2-oxobutanoate: step 3/4. The protein operates within amino-acid biosynthesis; L-valine biosynthesis; L-valine from pyruvate: step 3/4. Functionally, functions in the biosynthesis of branched-chain amino acids. Catalyzes the dehydration of (2R,3R)-2,3-dihydroxy-3-methylpentanoate (2,3-dihydroxy-3-methylvalerate) into 2-oxo-3-methylpentanoate (2-oxo-3-methylvalerate) and of (2R)-2,3-dihydroxy-3-methylbutanoate (2,3-dihydroxyisovalerate) into 2-oxo-3-methylbutanoate (2-oxoisovalerate), the penultimate precursor to L-isoleucine and L-valine, respectively. The protein is Dihydroxy-acid dehydratase of Salmonella paratyphi C (strain RKS4594).